We begin with the raw amino-acid sequence, 111 residues long: MANHEVIFKWYLSLNFNNSSVDWSDKDYSLTFSFDRNTDRNNMLSDSGETQQQILLWNQYQPQFLVVRVNAEKSGVNVDLWLIDIVNKTFATNFEVGLNYEWSVRTIYVGE.

This is an uncharacterized protein from Ureaplasma parvum serovar 3 (strain ATCC 700970).